Reading from the N-terminus, the 736-residue chain is Probable beta-glucosidase L (736 aa).

A signal peptide spans 1–21 (MNYRVPSLKATALAMAALTQA). Asparagine 224 carries N-linked (GlcNAc...) asparagine glycosylation. The active site involves aspartate 252. Asparagine 295, asparagine 363, asparagine 429, and asparagine 607 each carry an N-linked (GlcNAc...) asparagine glycan.

The protein belongs to the glycosyl hydrolase 3 family.

It localises to the secreted. It catalyses the reaction Hydrolysis of terminal, non-reducing beta-D-glucosyl residues with release of beta-D-glucose.. It participates in glycan metabolism; cellulose degradation. Its function is as follows. Beta-glucosidases are one of a number of cellulolytic enzymes involved in the degradation of cellulosic biomass. Catalyzes the last step releasing glucose from the inhibitory cellobiose. The sequence is that of Probable beta-glucosidase L (bglL) from Aspergillus terreus (strain NIH 2624 / FGSC A1156).